The sequence spans 112 residues: Putative pterin-4-alpha-carbinolamine dehydratase (112 aa).

It belongs to the pterin-4-alpha-carbinolamine dehydratase family.

The enzyme catalyses (4aS,6R)-4a-hydroxy-L-erythro-5,6,7,8-tetrahydrobiopterin = (6R)-L-erythro-6,7-dihydrobiopterin + H2O. This Shewanella frigidimarina (strain NCIMB 400) protein is Putative pterin-4-alpha-carbinolamine dehydratase.